The sequence spans 110 residues: UPF0122 protein lin1916 (110 aa).

The protein belongs to the UPF0122 family.

Its function is as follows. Might take part in the signal recognition particle (SRP) pathway. This is inferred from the conservation of its genetic proximity to ftsY/ffh. May be a regulatory protein. The polypeptide is UPF0122 protein lin1916 (Listeria innocua serovar 6a (strain ATCC BAA-680 / CLIP 11262)).